The primary structure comprises 153 residues: SsrA-binding protein (153 aa).

Belongs to the SmpB family.

It is found in the cytoplasm. Its function is as follows. Required for rescue of stalled ribosomes mediated by trans-translation. Binds to transfer-messenger RNA (tmRNA), required for stable association of tmRNA with ribosomes. tmRNA and SmpB together mimic tRNA shape, replacing the anticodon stem-loop with SmpB. tmRNA is encoded by the ssrA gene; the 2 termini fold to resemble tRNA(Ala) and it encodes a 'tag peptide', a short internal open reading frame. During trans-translation Ala-aminoacylated tmRNA acts like a tRNA, entering the A-site of stalled ribosomes, displacing the stalled mRNA. The ribosome then switches to translate the ORF on the tmRNA; the nascent peptide is terminated with the 'tag peptide' encoded by the tmRNA and targeted for degradation. The ribosome is freed to recommence translation, which seems to be the essential function of trans-translation. The sequence is that of SsrA-binding protein from Paramagnetospirillum magneticum (strain ATCC 700264 / AMB-1) (Magnetospirillum magneticum).